The primary structure comprises 65 residues: Weak toxin CM-10 (65 aa).

5 cysteine pairs are disulfide-bonded: cysteine 3-cysteine 24, cysteine 6-cysteine 11, cysteine 17-cysteine 42, cysteine 46-cysteine 57, and cysteine 58-cysteine 63.

The protein belongs to the three-finger toxin family. Ancestral subfamily. Orphan group II sub-subfamily. Expressed by the venom gland.

The protein localises to the secreted. Its function is as follows. Binds with low affinity to muscular (alpha-1-beta-1-delta-epsilon/CHRNA1-CHRNB1-CHRND-CHRNE) and very low affinity to neuronal (alpha-7/CHRNA7) nicotinic acetylcholine receptor (nAChR). In Naja nivea (Cape cobra), this protein is Weak toxin CM-10.